The chain runs to 113 residues: Fruiting body-specific class I hydrophobin fbh1 (113 aa).

The first 20 residues, 1-20 (MFSIRIATVVLAASALLAAA), serve as a signal peptide directing secretion. Disulfide bonds link C33/C92, C40/C86, C41/C73, and C93/C106.

The protein belongs to the fungal hydrophobin family. In terms of assembly, self-assembles to form functional amyloid fibrils called rodlets. Self-assembly into fibrillar rodlets occurs spontaneously at hydrophobic:hydrophilic interfaces and the rodlets further associate laterally to form amphipathic monolayers.

It is found in the secreted. The protein resides in the cell wall. In terms of biological role, aerial growth, conidiation, and dispersal of filamentous fungi in the environment rely upon a capability of their secreting small amphipathic proteins called hydrophobins (HPBs) with low sequence identity. Class I can self-assemble into an outermost layer of rodlet bundles on aerial cell surfaces, conferring cellular hydrophobicity that supports fungal growth, development and dispersal; whereas Class II form highly ordered films at water-air interfaces through intermolecular interactions but contribute nothing to the rodlet structure. Fbh1 is a fruiting body-specific class I hydrophobin that is involved in the growth rate and primordia formation. The polypeptide is Fruiting body-specific class I hydrophobin fbh1 (Pleurotus ostreatus (strain PC15) (Oyster mushroom)).